Consider the following 254-residue polypeptide: Phosphate import ATP-binding protein PstB (254 aa).

The region spanning 9 to 249 is the ABC transporter domain; sequence MSVKDLDLFY…PVDKRTEDYI (241 aa). Residue 41-48 participates in ATP binding; sequence GPSGCGKS.

This sequence belongs to the ABC transporter superfamily. Phosphate importer (TC 3.A.1.7) family. As to quaternary structure, the complex is composed of two ATP-binding proteins (PstB), two transmembrane proteins (PstC and PstA) and a solute-binding protein (PstS).

The protein localises to the cell membrane. It carries out the reaction phosphate(out) + ATP + H2O = ADP + 2 phosphate(in) + H(+). Part of the ABC transporter complex PstSACB involved in phosphate import. Responsible for energy coupling to the transport system. In Clostridioides difficile (strain 630) (Peptoclostridium difficile), this protein is Phosphate import ATP-binding protein PstB.